Reading from the N-terminus, the 268-residue chain is Calpain small subunit 1 (268 aa).

The residue at position 1 (M1) is an N-acetylmethionine. S6 bears the Phosphoserine mark. The EF-hand 1; atypical domain maps to E91–N125. Ca(2+)-binding residues include A109, D112, E114, E119, D137, D152, D154, T156, K158, and E163. EF-hand domains lie at F139–K172, N169–H204, L205–L233, and V234–S268. K179 is modified (N6-acetyllysine). Ca(2+)-binding residues include D182, D184, S186, T188, E193, and D225.

In terms of assembly, homodimer or heterodimer of a large (catalytic) and a small (regulatory) subunit. In presence of calcium, the heterodimer dissociates.

It is found in the cytoplasm. Its subcellular location is the cell membrane. Functionally, regulatory subunit of the calcium-regulated non-lysosomal thiol-protease which catalyzes limited proteolysis of substrates involved in cytoskeletal remodeling and signal transduction. Essential for embryonic development. In Homo sapiens (Human), this protein is Calpain small subunit 1 (CAPNS1).